The primary structure comprises 216 residues: MSELKIKAAKAAIAYIEDDMVIGVGTGSTVNFFIKELAAIKHKIEACVASSKATEALLRAEGIPVIDLNSVQDLPIYVDGADEVNERGEMIKGGGGALTREKIVANVATQFICIVDESKVVKRLGEFPVAVEVIPMARSFVARQIVKLGGDPEYREGFVTDNGNIILDVFNLNFSTPMALEDSLNVIPGVVENGVFAKRLADKVLVASASGVNNLK.

Substrate contacts are provided by residues 26 to 29 (TGST), 79 to 82 (DGAD), and 92 to 95 (KGGG). Glu101 functions as the Proton acceptor in the catalytic mechanism. Lys119 provides a ligand contact to substrate.

Belongs to the ribose 5-phosphate isomerase family. Homodimer.

The catalysed reaction is aldehydo-D-ribose 5-phosphate = D-ribulose 5-phosphate. The protein operates within carbohydrate degradation; pentose phosphate pathway; D-ribose 5-phosphate from D-ribulose 5-phosphate (non-oxidative stage): step 1/1. Functionally, catalyzes the reversible conversion of ribose-5-phosphate to ribulose 5-phosphate. The polypeptide is Ribose-5-phosphate isomerase A (Legionella pneumophila (strain Corby)).